Here is a 197-residue protein sequence, read N- to C-terminus: Phosphoheptose isomerase (197 aa).

The 163-residue stretch at 34-196 (MVNCLLGGNK…DRTLFPQDEQ (163 aa)) folds into the SIS domain. Substrate is bound at residue 49–51 (NGG). Residues H58 and E62 each coordinate Zn(2+). Substrate is bound by residues E62, 91 to 92 (ND), 117 to 119 (STS), S122, and Q172. The Zn(2+) site is built by Q172 and H180.

Belongs to the SIS family. GmhA subfamily. As to quaternary structure, homotetramer. It depends on Zn(2+) as a cofactor.

The protein localises to the cytoplasm. The catalysed reaction is 2 D-sedoheptulose 7-phosphate = D-glycero-alpha-D-manno-heptose 7-phosphate + D-glycero-beta-D-manno-heptose 7-phosphate. It functions in the pathway carbohydrate biosynthesis; D-glycero-D-manno-heptose 7-phosphate biosynthesis; D-glycero-alpha-D-manno-heptose 7-phosphate and D-glycero-beta-D-manno-heptose 7-phosphate from sedoheptulose 7-phosphate: step 1/1. Functionally, catalyzes the isomerization of sedoheptulose 7-phosphate in D-glycero-D-manno-heptose 7-phosphate. The polypeptide is Phosphoheptose isomerase (Shewanella pealeana (strain ATCC 700345 / ANG-SQ1)).